The primary structure comprises 514 residues: Peptide chain release factor 3 (514 aa).

A tr-type G domain is found at 8–268 (KKRRTFAIIS…TFLEFAPEPH (261 aa)). GTP is bound by residues 17-24 (SHPDAGKT), 85-89 (DTPGH), and 139-142 (NKLD).

Belongs to the TRAFAC class translation factor GTPase superfamily. Classic translation factor GTPase family. PrfC subfamily.

Its subcellular location is the cytoplasm. Increases the formation of ribosomal termination complexes and stimulates activities of RF-1 and RF-2. It binds guanine nucleotides and has strong preference for UGA stop codons. It may interact directly with the ribosome. The stimulation of RF-1 and RF-2 is significantly reduced by GTP and GDP, but not by GMP. The sequence is that of Peptide chain release factor 3 from Streptococcus pyogenes serotype M49 (strain NZ131).